The chain runs to 162 residues: Corticoliberin-2 (162 aa).

Residues 1-24 (MRLNFLVTTMALLVAFPPPYECRA) form the signal peptide. Positions 25–119 (IDSSSNQPVT…ALDSEERERR (95 aa)) are excised as a propeptide. Residues 57 to 79 (LGNRNKNSPRSPPDTYPEASQYS) form a disordered region. Phe-160 carries the post-translational modification Phenylalanine amide.

This sequence belongs to the sauvagine/corticotropin-releasing factor/urotensin I family.

It localises to the secreted. Functionally, this hormone from hypothalamus regulates the release of corticotropin from pituitary gland. In Catostomus commersonii (White sucker), this protein is Corticoliberin-2 (crf2).